The primary structure comprises 165 residues: Phosphopantetheine adenylyltransferase (165 aa).

Position 8 (Ser8) interacts with substrate. ATP-binding positions include 8 to 9 (SF) and His16. Substrate contacts are provided by Lys40, Thr72, and Arg86. Residues 87-89 (GLR), Glu97, and 122-128 (YSFLSSS) contribute to the ATP site.

Belongs to the bacterial CoaD family. As to quaternary structure, homohexamer. Mg(2+) serves as cofactor.

It localises to the cytoplasm. It catalyses the reaction (R)-4'-phosphopantetheine + ATP + H(+) = 3'-dephospho-CoA + diphosphate. It participates in cofactor biosynthesis; coenzyme A biosynthesis; CoA from (R)-pantothenate: step 4/5. Reversibly transfers an adenylyl group from ATP to 4'-phosphopantetheine, yielding dephospho-CoA (dPCoA) and pyrophosphate. This chain is Phosphopantetheine adenylyltransferase, found in Synechococcus sp. (strain WH7803).